A 432-amino-acid chain; its full sequence is Glutamate-1-semialdehyde 2,1-aminomutase 2 (432 aa).

Residue Lys268 is modified to N6-(pyridoxal phosphate)lysine.

This sequence belongs to the class-III pyridoxal-phosphate-dependent aminotransferase family. HemL subfamily. As to quaternary structure, homodimer. Requires pyridoxal 5'-phosphate as cofactor.

It is found in the cytoplasm. The catalysed reaction is (S)-4-amino-5-oxopentanoate = 5-aminolevulinate. Its pathway is porphyrin-containing compound metabolism; protoporphyrin-IX biosynthesis; 5-aminolevulinate from L-glutamyl-tRNA(Glu): step 2/2. This is Glutamate-1-semialdehyde 2,1-aminomutase 2 from Listeria monocytogenes serotype 4b (strain F2365).